Here is a 273-residue protein sequence, read N- to C-terminus: Dermonecrotic toxin LapSicTox-alphaIB1aiv (273 aa).

His-5 is a catalytic residue. Positions 25 and 27 each coordinate Mg(2+). His-41 acts as the Nucleophile in catalysis. 2 cysteine pairs are disulfide-bonded: Cys-45-Cys-51 and Cys-47-Cys-190. Asp-85 provides a ligand contact to Mg(2+). Asn-250 is a glycosylation site (N-linked (GlcNAc...) asparagine).

Belongs to the arthropod phospholipase D family. Class II subfamily. The cofactor is Mg(2+). In terms of tissue distribution, expressed by the venom gland.

It is found in the secreted. The enzyme catalyses an N-(acyl)-sphingosylphosphocholine = an N-(acyl)-sphingosyl-1,3-cyclic phosphate + choline. It catalyses the reaction an N-(acyl)-sphingosylphosphoethanolamine = an N-(acyl)-sphingosyl-1,3-cyclic phosphate + ethanolamine. It carries out the reaction a 1-acyl-sn-glycero-3-phosphocholine = a 1-acyl-sn-glycero-2,3-cyclic phosphate + choline. The catalysed reaction is a 1-acyl-sn-glycero-3-phosphoethanolamine = a 1-acyl-sn-glycero-2,3-cyclic phosphate + ethanolamine. Dermonecrotic toxins cleave the phosphodiester linkage between the phosphate and headgroup of certain phospholipids (sphingolipid and lysolipid substrates), forming an alcohol (often choline) and a cyclic phosphate. This toxin acts on sphingomyelin (SM). It may also act on ceramide phosphoethanolamine (CPE), lysophosphatidylcholine (LPC) and lysophosphatidylethanolamine (LPE), but not on lysophosphatidylserine (LPS), and lysophosphatidylglycerol (LPG). It acts by transphosphatidylation, releasing exclusively cyclic phosphate products as second products. Induces dermonecrosis, hemolysis, increased vascular permeability, edema, inflammatory response, and platelet aggregation. This is Dermonecrotic toxin LapSicTox-alphaIB1aiv from Loxosceles apachea (Apache recluse spider).